Consider the following 337-residue polypeptide: Glyceraldehyde-3-phosphate dehydrogenase (337 aa).

NAD(+)-binding positions include 12 to 13, D34, and R79; that span reads RI. D-glyceraldehyde 3-phosphate-binding positions include 150–152, T181, 210–211, and R233; these read SCT and TG. Residue C151 is the Nucleophile of the active site. Position 315 (N315) interacts with NAD(+).

This sequence belongs to the glyceraldehyde-3-phosphate dehydrogenase family. As to quaternary structure, homotetramer.

It localises to the cytoplasm. The catalysed reaction is D-glyceraldehyde 3-phosphate + phosphate + NAD(+) = (2R)-3-phospho-glyceroyl phosphate + NADH + H(+). It functions in the pathway carbohydrate degradation; glycolysis; pyruvate from D-glyceraldehyde 3-phosphate: step 1/5. The chain is Glyceraldehyde-3-phosphate dehydrogenase (GPD) from Coccidioides posadasii (strain C735) (Valley fever fungus).